Consider the following 326-residue polypeptide: DNA-binding death effector domain-containing protein 2 (326 aa).

A DED domain is found at 25–104 (SLHRMFEVVG…RHDLLPHLAR (80 aa)). The short motif at 104-109 (RKRRRP) is the Nuclear localization signal element. The segment at 104 to 194 (RKRRRPVSPE…PARPSSEGKV (91 aa)) is disordered. A compositionally biased stretch (low complexity) spans 136-146 (SSSSANSQQGQ). The Bipartite nuclear localization signal signature appears at 155–173 (KRQRRSRGRPSGGARRRRR). Residues 155 to 174 (KRQRRSRGRPSGGARRRRRG) are compositionally biased toward basic residues. Positions 175-191 (APAAPQQQSEPARPSSE) are enriched in low complexity.

As to quaternary structure, interacts with CASP8, CASP10 and GTF3C3. Homodimerizes and heterodimerizes with DEDD. In terms of tissue distribution, expressed in most tissues. High levels were found in liver, kidney, heart, ovary, spleen, testes, skeletal muscle and peripheral blood leukocytes. Expression was absent or low in colon and small intestine. Expression is relatively high in the tumor cell lines chronic myologenous leukemia K-562 and the colorectal adenocarcinoma SW480. Expression is moderate in the cervical carcinoma HeLa, the Burkitt's lymphoma Raji, the lung carcinoma A-549, and the melanoma G-361. In contrast, two leukemia cell lines, HL-60 (promyelocytic leukemia) and MOLT-4 (lymphoblastic leukemia), show relatively low levels.

It localises to the nucleus. The protein localises to the nucleolus. Functionally, may play a critical role in death receptor-induced apoptosis and may target CASP8 and CASP10 to the nucleus. May regulate degradation of intermediate filaments during apoptosis. May play a role in the general transcription machinery in the nucleus and might be an important regulator of the activity of GTF3C3. The sequence is that of DNA-binding death effector domain-containing protein 2 (DEDD2) from Homo sapiens (Human).